The primary structure comprises 396 residues: 8-amino-7-oxononanoate synthase (396 aa).

Residue Arg-19 coordinates substrate. 106-107 is a binding site for pyridoxal 5'-phosphate; the sequence is GY. Substrate is bound at residue His-131. 3 residues coordinate pyridoxal 5'-phosphate: Ser-176, His-204, and Thr-233. Residue Lys-236 is modified to N6-(pyridoxal phosphate)lysine. Thr-350 contributes to the substrate binding site.

The protein belongs to the class-II pyridoxal-phosphate-dependent aminotransferase family. BioF subfamily. As to quaternary structure, homodimer. The cofactor is pyridoxal 5'-phosphate.

The catalysed reaction is 6-carboxyhexanoyl-[ACP] + L-alanine + H(+) = (8S)-8-amino-7-oxononanoate + holo-[ACP] + CO2. Its pathway is cofactor biosynthesis; biotin biosynthesis. Functionally, catalyzes the decarboxylative condensation of pimeloyl-[acyl-carrier protein] and L-alanine to produce 8-amino-7-oxononanoate (AON), [acyl-carrier protein], and carbon dioxide. The polypeptide is 8-amino-7-oxononanoate synthase (Pseudomonas syringae pv. tomato (strain ATCC BAA-871 / DC3000)).